The following is a 1357-amino-acid chain: Kinectin (1357 aa).

At 1 to 6 (MEFYES) the chain is on the cytoplasmic side. The helical; Signal-anchor for type II membrane protein transmembrane segment at 7–29 (AYFIVLIPSIVITVIFLFFWLFM) threads the bilayer. Residues 30 to 1357 (KETLYDEVLA…KEKEHYQVLE (1328 aa)) are Lumenal-facing. Disordered stretches follow at residues 48-81 (IPTKTDKKKAEKKKNKKKEIQNGNLHESDSESVP) and 103-218 (NVVE…KQKT). Phosphoserine; by FAM20C is present on Ser-75. Ser-77 carries the post-translational modification Phosphoserine. Residues 121 to 135 (QKPVLEEQVIKESDA) are compositionally biased toward basic and acidic residues. Thr-153 bears the Phosphothreonine mark. Ser-156 carries the phosphoserine modification. The segment covering 161–171 (SKKKPGQKKSK) has biased composition (basic residues). 5 N-linked (GlcNAc...) asparagine glycosylation sites follow: Asn-172, Asn-435, Asn-772, Asn-904, and Asn-1055. Positions 172 to 182 (NGSDDQDKKVE) are enriched in basic and acidic residues. Residues 330–1356 (LIHQLQEKDK…TKEKEHYQVL (1027 aa)) are a coiled coil. Residue Ser-1084 is modified to Phosphoserine. 2 N-linked (GlcNAc...) asparagine glycosylation sites follow: Asn-1088 and Asn-1263. Ser-1313 is modified (phosphoserine). Asn-1329 is a glycosylation site (N-linked (GlcNAc...) asparagine).

It belongs to the kinectin family. As to quaternary structure, parallel homodimers formed between the membrane-bound and the cytosolic form, and also between 2 cytosolic forms. As to expression, high levels in peripheral blood lymphocytes, testis and ovary, lower levels in spleen, thymus, prostate, small intestine and colon.

The protein resides in the endoplasmic reticulum membrane. Its function is as follows. Receptor for kinesin thus involved in kinesin-driven vesicle motility. Accumulates in integrin-based adhesion complexes (IAC) upon integrin aggregation by fibronectin. This is Kinectin (KTN1) from Homo sapiens (Human).